The following is a 92-amino-acid chain: Large ribosomal subunit protein eL43A (92 aa).

The C4-type zinc-finger motif lies at 39–60 (CSFCGKKTVKRGAAGIWTCSCC). At S40 the chain carries Phosphoserine.

Belongs to the eukaryotic ribosomal protein eL43 family. As to quaternary structure, component of the large ribosomal subunit (LSU). Mature yeast ribosomes consist of a small (40S) and a large (60S) subunit. The 40S small subunit contains 1 molecule of ribosomal RNA (18S rRNA) and 33 different proteins (encoded by 57 genes). The large 60S subunit contains 3 rRNA molecules (25S, 5.8S and 5S rRNA) and 46 different proteins (encoded by 81 genes).

The protein resides in the cytoplasm. Component of the ribosome, a large ribonucleoprotein complex responsible for the synthesis of proteins in the cell. The small ribosomal subunit (SSU) binds messenger RNAs (mRNAs) and translates the encoded message by selecting cognate aminoacyl-transfer RNA (tRNA) molecules. The large subunit (LSU) contains the ribosomal catalytic site termed the peptidyl transferase center (PTC), which catalyzes the formation of peptide bonds, thereby polymerizing the amino acids delivered by tRNAs into a polypeptide chain. The nascent polypeptides leave the ribosome through a tunnel in the LSU and interact with protein factors that function in enzymatic processing, targeting, and the membrane insertion of nascent chains at the exit of the ribosomal tunnel. The chain is Large ribosomal subunit protein eL43A from Saccharomyces cerevisiae (strain ATCC 204508 / S288c) (Baker's yeast).